Reading from the N-terminus, the 239-residue chain is Myogenic factor 6 (239 aa).

The tract at residues 28–64 (HLDMSGVSPLYNGNDSPLSPGQDNVPSETGGESSGDE) is disordered. The segment covering 38-58 (YNGNDSPLSPGQDNVPSETGG) has biased composition (polar residues). A bHLH domain is found at 96–147 (DRRKAATLRERRRLKKINEAFDALKRKTVANPNQRLPKVEILRSAISYIERL). A disordered region spans residues 155–189 (DEQERSQSGASDTRNDKEQNRPSGGDYRWKKASNT).

Efficient DNA binding requires dimerization with another bHLH protein.

Its subcellular location is the nucleus. Functionally, involved in muscle differentiation (myogenic factor). Induces fibroblasts to differentiate into myoblasts. Probable sequence specific DNA-binding protein. The sequence is that of Myogenic factor 6 (myf6) from Takifugu rubripes (Japanese pufferfish).